Consider the following 237-residue polypeptide: Cytosolic-abundant heat soluble protein 86272 (237 aa).

The segment at 96–125 (FKDQEKYSREQAAIARAHDKDLEKKTEEYR) is disordered. A compositionally biased stretch (basic and acidic residues) spans 111 to 125 (RAHDKDLEKKTEEYR). Residues 115–193 (KDLEKKTEEY…MNALEQSKMA (79 aa)) are a coiled coil. CAHS motif regions lie at residues 124–142 (YRKT…LEKQ) and 161–179 (QKRE…LEHE). Over residues 204 to 215 (AGTTVSGGTTVS) the composition is skewed to low complexity. The disordered stretch occupies residues 204–237 (AGTTVSGGTTVSEHTEVHDGKEKKSLGEKIKSLF). The segment covering 216–237 (EHTEVHDGKEKKSLGEKIKSLF) has biased composition (basic and acidic residues).

Belongs to the Cytosolic-abundant heat soluble protein (CAHS) family.

Its subcellular location is the cytoplasm. Its function is as follows. CAHS proteins are cytosolic heat soluble proteins that seem to contribute to the anhydrobiosis in tardigrades, but their specific mechanisms are yet to be identified. It is possible that protection during anhydrobiosis might occur via the stabilization of vitrifying small molecules such as sugars, but not via the direct glass transition of CAHS proteins themselves. This Hypsibius exemplaris (Freshwater tardigrade) protein is Cytosolic-abundant heat soluble protein 86272.